The primary structure comprises 230 residues: Probable endonuclease C19F8.04c (230 aa).

Residues 10 to 27 traverse the membrane as a helical segment; sequence AIIGTGLITTSIGGFFFL. One can recognise a TNase-like domain in the interval 55-216; it reads KTMFGYVTRV…KKKKLSLWSQ (162 aa). The active site involves R104. D109 contributes to the Ca(2+) binding site. Active-site residues include E112 and R152.

It belongs to the LCL3 family.

It is found in the mitochondrion. Its subcellular location is the membrane. The polypeptide is Probable endonuclease C19F8.04c (Schizosaccharomyces pombe (strain 972 / ATCC 24843) (Fission yeast)).